The following is a 512-amino-acid chain: ATP synthase subunit alpha (512 aa).

170–177 (GDRQTGKT) is an ATP binding site.

The protein belongs to the ATPase alpha/beta chains family. F-type ATPases have 2 components, CF(1) - the catalytic core - and CF(0) - the membrane proton channel. CF(1) has five subunits: alpha(3), beta(3), gamma(1), delta(1), epsilon(1). CF(0) has three main subunits: a(1), b(2) and c(9-12). The alpha and beta chains form an alternating ring which encloses part of the gamma chain. CF(1) is attached to CF(0) by a central stalk formed by the gamma and epsilon chains, while a peripheral stalk is formed by the delta and b chains.

The protein localises to the cell inner membrane. The catalysed reaction is ATP + H2O + 4 H(+)(in) = ADP + phosphate + 5 H(+)(out). In terms of biological role, produces ATP from ADP in the presence of a proton gradient across the membrane. The alpha chain is a regulatory subunit. This is ATP synthase subunit alpha from Solibacter usitatus (strain Ellin6076).